The primary structure comprises 794 residues: Zinc finger Y-chromosomal protein 1 (794 aa).

The Nuclear localization signal signature appears at 380–389 (TKQKLKKKRR). 13 C2H2-type zinc fingers span residues 411-433 (YPCM…MKNH), 442-464 (YRCT…LESH), 477-499 (LECE…KLTH), 508-531 (HICK…LAVH), 537-559 (HICV…MRTH), 565-588 (YLCQ…KTKH), 594-616 (FKCD…AILH), 622-645 (HQCL…ISVH), 651-673 (HKCE…EAAH), 679-702 (HQCR…LSVH), 708-730 (YRCK…MKTH), 736-759 (YQCE…ISIH), and 765-788 (HRCD…LKHH).

The protein belongs to the krueppel C2H2-type zinc-finger protein family. ZFX/ZFY subfamily.

It is found in the nucleus. Probable transcriptional activator. This Xenopus laevis (African clawed frog) protein is Zinc finger Y-chromosomal protein 1 (zfy1).